The following is a 1256-amino-acid chain: Nephrin (1256 aa).

Residues 1–35 form the signal peptide; the sequence is MGAKEATVRGPGASPVHRTCHLIPLLLAGMLTTGL. The Extracellular portion of the chain corresponds to 36–1078; that stretch reads AQSPVPTSAP…PGPPRLPLLP (1043 aa). 6 Ig-like C2-type domains span residues 39–144, 149–247, 256–347, 354–448, 454–554, and 558–649; these read PVPT…VILS, PKVL…ASFT, PPVI…RSIT, PSAV…KSLT, PAQK…TQLV, and PPTN…ETVS. Residue Asn54 is glycosylated (N-linked (GlcNAc...) asparagine). Intrachain disulfides connect Cys67–Cys125, Cys174–Cys231, and Cys279–Cys331. N-linked (GlcNAc...) asparagine glycosylation is found at Asn370 and Asn415. An intrachain disulfide couples Cys375 to Cys431. Ser446 is subject to Phosphoserine. Cysteines 479 and 542 form a disulfide. The disordered stretch occupies residues 491–516; that stretch reads TWLKDSRPVNDPRQSQEPRRVQLGSV. Positions 494–510 are enriched in basic and acidic residues; sequence KDSRPVNDPRQSQEPRR. N-linked (GlcNAc...) asparagine glycosylation is found at Asn561, Asn578, Asn591, and Asn722. The cysteines at positions 581 and 637 are disulfide-linked. 2 consecutive Ig-like C2-type domains span residues 754 to 846 and 852 to 953; these read PTIR…LVRL and PQVD…VSIS. Disulfide bonds link Cys775–Cys830 and Cys877–Cys934. The Fibronectin type-III domain maps to 957 to 1051; that stretch reads PPLGLKVVSV…GIQVSITTPG (95 aa). Residues 1048-1071 form a disordered region; that stretch reads TTPGLDQAPEDTDQPLPTEQPPGP. Residues 1079–1099 form a helical membrane-spanning segment; that stretch reads VLFAVGGLLLLSNASCVGGLL. The Cytoplasmic segment spans residues 1100 to 1256; sequence WRRRLRRLAE…LPFELRGHLV (157 aa). The residue at position 1112 (Ser1112) is a Phosphoserine. Over residues 1112 to 1128 the composition is skewed to basic and acidic residues; the sequence is SEKTEAGSEEDRIRNEY. Residues 1112–1143 form a disordered region; that stretch reads SEKTEAGSEEDRIRNEYEESQWTGDRDTRSST. A Phosphothreonine modification is found at Thr1115. A Phosphoserine modification is found at Ser1119. Phosphotyrosine; by FYN is present on Tyr1208.

The protein belongs to the immunoglobulin superfamily. Interacts with NPHS2 and with CD2AP (via C-terminal domain). Interacts with MAGI1 (via PDZ 2 and 3 domains) forming a tripartite complex with IGSF5/JAM4. Forms a complex with ACTN4, CASK, IQGAP1, MAGI2, SPTAN1 and SPTBN1. Interacts with DDN; the interaction is direct. Self-associates (via the Ig-like domains). Also interacts (via the Ig-like domains) with KIRREL1 and KIRREL2; the interaction with KIRREL1 is dependent on KIRREL1 glycosylation. Interacts with KIRREL3. Interacts with phosphatidylinositol 3-kinase regulatory subunit PIK3R1; the interaction is reduced by high glucose levels. Post-translationally, phosphorylated at Tyr-1208 by FYN, leading to the recruitment and activation of phospholipase C-gamma-1/PLCG1. Tyrosine phosphorylation is reduced by high glucose levels. Dephosphorylated by tensin TNS2 which leads to reduced binding of NPHN1 to PIK3R1. Expressed in kidney glomeruli. In the embryo, expressed in the mesonephric kidney at 11 dpc with strong expression in cranial tubules with podocyte-like structures. Expression is observed in the podocytes of the developing kidney from 13 dpc. High expression is also detected in the developing cerebellum, hindbrain, spinal cord, retina and hypothalamus. Expressed in skeletal muscle during myoblast fusion such as in the adult following acute injury and in the embryo but not detected in uninjured adult skeletal muscle. Isoform 1 and isoform 2 are expressed in the newborn brain and developing cerebellum. Isoform 1 is the predominant isoform in adult kidney.

The protein resides in the cell membrane. Seems to play a role in the development or function of the kidney glomerular filtration barrier. Regulates glomerular vascular permeability. May anchor the podocyte slit diaphragm to the actin cytoskeleton. Plays a role in skeletal muscle formation through regulation of myoblast fusion. This chain is Nephrin (Nphs1), found in Mus musculus (Mouse).